Here is a 219-residue protein sequence, read N- to C-terminus: UPF0502 protein Gura_3445 (219 aa).

The segment at 162–181 is disordered; sequence AGEPDLPDDTPAPPPEPARQ.

The protein belongs to the UPF0502 family.

The protein is UPF0502 protein Gura_3445 of Geotalea uraniireducens (strain Rf4) (Geobacter uraniireducens).